The sequence spans 431 residues: L-cysteine:1D-myo-inositol 2-amino-2-deoxy-alpha-D-glucopyranoside ligase (431 aa).

Cys-44 lines the Zn(2+) pocket. L-cysteinyl-5'-AMP contacts are provided by residues 44-47 (CGIT), Thr-59, and 82-84 (NVT). The 'HIGH' region motif lies at 46–56 (ITPYDATHLGH). The 'ERGGDP' region signature appears at 187–192 (ERGGDP). Trp-227 contacts L-cysteinyl-5'-AMP. Cys-231 is a Zn(2+) binding site. L-cysteinyl-5'-AMP is bound at residue 249-251 (GND). His-256 contacts Zn(2+). Ile-283 contributes to the L-cysteinyl-5'-AMP binding site. The short motif at 289 to 293 (KMSKS) is the 'KMSKS' region element.

It belongs to the class-I aminoacyl-tRNA synthetase family. MshC subfamily. As to quaternary structure, monomer. Zn(2+) serves as cofactor.

It catalyses the reaction 1D-myo-inositol 2-amino-2-deoxy-alpha-D-glucopyranoside + L-cysteine + ATP = 1D-myo-inositol 2-(L-cysteinylamino)-2-deoxy-alpha-D-glucopyranoside + AMP + diphosphate + H(+). Catalyzes the ATP-dependent condensation of GlcN-Ins and L-cysteine to form L-Cys-GlcN-Ins. This Stackebrandtia nassauensis (strain DSM 44728 / CIP 108903 / NRRL B-16338 / NBRC 102104 / LLR-40K-21) protein is L-cysteine:1D-myo-inositol 2-amino-2-deoxy-alpha-D-glucopyranoside ligase.